The chain runs to 393 residues: Putative F-box protein At1g55070 (393 aa).

The F-box domain occupies 29 to 74 (GEYFDRIPADLVIKILSKLSAKSMAKCRCVCKLLSSIIRQPNYNQL).

This is Putative F-box protein At1g55070 from Arabidopsis thaliana (Mouse-ear cress).